Here is a 496-residue protein sequence, read N- to C-terminus: UDP-glycosyltransferase 73C2 (496 aa).

Residues Ser297, 357 to 359, 374 to 382, and 396 to 399 each bind UDP-alpha-D-glucose; these read SPQ, HCGWNSTLE, and FGDQ.

This sequence belongs to the UDP-glycosyltransferase family.

The polypeptide is UDP-glycosyltransferase 73C2 (UGT73C2) (Arabidopsis thaliana (Mouse-ear cress)).